Consider the following 83-residue polypeptide: Protein L83L (83 aa).

It belongs to the asfivirus L83L family. As to quaternary structure, interacts with host IL1B.

It is found in the host cytoplasm. In terms of biological role, may subvert the host innate immune response by interacting with host IL1B and interfering with its function. The sequence is that of Protein L83L from Ornithodoros (relapsing fever ticks).